The primary structure comprises 110 residues: UPF0060 membrane protein SACE_5620 (110 aa).

A run of 4 helical transmembrane segments spans residues 8–28, 34–54, 63–83, and 89–109; these read VVLF…VWQG, GLLW…VATF, ILAA…VVVD, and RWDL…MYAP.

It belongs to the UPF0060 family.

The protein resides in the cell membrane. The sequence is that of UPF0060 membrane protein SACE_5620 from Saccharopolyspora erythraea (strain ATCC 11635 / DSM 40517 / JCM 4748 / NBRC 13426 / NCIMB 8594 / NRRL 2338).